The sequence spans 272 residues: Phosphatidylglycerol--prolipoprotein diacylglyceryl transferase (272 aa).

4 helical membrane passes run 21-41, 60-80, 101-121, and 131-151; these read IAVH…IFVA, YIWW…VLFY, GVYA…FIIA, and VSFW…YIFG. R152 is an a 1,2-diacyl-sn-glycero-3-phospho-(1'-sn-glycerol) binding site. A run of 3 helical transmembrane segments spans residues 181 to 201, 209 to 229, and 244 to 264; these read PSQI…LAFY, GQLA…AEFF, and LTMG…FYVV.

This sequence belongs to the Lgt family.

The protein resides in the cell inner membrane. The enzyme catalyses L-cysteinyl-[prolipoprotein] + a 1,2-diacyl-sn-glycero-3-phospho-(1'-sn-glycerol) = an S-1,2-diacyl-sn-glyceryl-L-cysteinyl-[prolipoprotein] + sn-glycerol 1-phosphate + H(+). It functions in the pathway protein modification; lipoprotein biosynthesis (diacylglyceryl transfer). Its function is as follows. Catalyzes the transfer of the diacylglyceryl group from phosphatidylglycerol to the sulfhydryl group of the N-terminal cysteine of a prolipoprotein, the first step in the formation of mature lipoproteins. This chain is Phosphatidylglycerol--prolipoprotein diacylglyceryl transferase, found in Aliarcobacter butzleri (strain RM4018) (Arcobacter butzleri).